A 93-amino-acid chain; its full sequence is Alpha-defensin 1 (93 aa).

The signal sequence occupies residues 1 to 19 (MKKLVLLFALVLLGFQVQA). Residues 20–58 (DSIQNTDEETKTEEQPGEEDQAVSVSFGDPEGTSLQEES) constitute a propeptide that is removed on maturation. The disordered stretch occupies residues 24–54 (NTDEETKTEEQPGEEDQAVSVSFGDPEGTSL). Intrachain disulfides connect cysteine 64–cysteine 92, cysteine 66–cysteine 81, and cysteine 71–cysteine 91.

This sequence belongs to the alpha-defensin family. As to expression, paneth cells of the small bowel.

The protein resides in the secreted. In terms of biological role, probably contributes to the antimicrobial barrier function of the small bowel mucosa. Has antibacterial activity against attenuated mutants of S.typhimurium. The polypeptide is Alpha-defensin 1 (Defa1) (Mus musculus (Mouse)).